The chain runs to 317 residues: Inactive serine protease 45 (317 aa).

A signal peptide spans 1-35 (MATSLRGLDAGPGSLRRWILICFAALLLLPPRPNL). Asparagine 40 carries an N-linked (GlcNAc...) asparagine glycan. The Peptidase S1 domain maps to 44 to 291 (PVCGTPWWPD…YTIWIKDQVS (248 aa)). Cysteine 75 and cysteine 91 are joined by a disulfide. An N-linked (GlcNAc...) asparagine glycan is attached at asparagine 110. Cystine bridges form between cysteine 172–cysteine 249, cysteine 207–cysteine 230, and cysteine 239–cysteine 267. A glycan (N-linked (GlcNAc...) asparagine) is linked at asparagine 272.

Belongs to the peptidase S1 family.

It localises to the secreted. The sequence is that of Inactive serine protease 45 from Mus musculus (Mouse).